We begin with the raw amino-acid sequence, 466 residues long: MIATGKIIQIIGAVVDVEFDQNSVPKIYNALEVKNKKIQLILEVQQQLGAGIVRTIAMGSTNGLKRGLIVIDLGHYIKVPVGQATLGRIINVLGKTIDNKGPLKNLDNSKLEYWEIHRSAPSYQEQASSQEILETGIKVIDLICPFSKGGKVGLFGGAGVGKTVNMMELIRNIAIEHSGYSVFTGVGERTREGNDFYHEMKDSKVLDKVSLVYGQMNEPPGNRLRVAFTGLTIAEKFRDEGRDVLLFIDNIYRYTLAGTEVSALLGRMPSAVGYQPTLAEEMGLLQERITSTKEGSITSVQAVYVPADDLTDPSPATTFAHLDSTVTLSRQIAALGIYPAIDPLNSTSRQLDPYIVGDEHYDTARGVQSILQRYQELKDIIAILGMDELSQEDKILVSRARKIQRFLSQPFFVAEVFTGFPGKYVSLKDNIRAFKGIIGGEFDNLPEQAFYMVGTIEEVIKKAKLL.

Residue Gly-156–Thr-163 coordinates ATP.

This sequence belongs to the ATPase alpha/beta chains family. As to quaternary structure, F-type ATPases have 2 components, CF(1) - the catalytic core - and CF(0) - the membrane proton channel. CF(1) has five subunits: alpha(3), beta(3), gamma(1), delta(1), epsilon(1). CF(0) has three main subunits: a(1), b(2) and c(9-12). The alpha and beta chains form an alternating ring which encloses part of the gamma chain. CF(1) is attached to CF(0) by a central stalk formed by the gamma and epsilon chains, while a peripheral stalk is formed by the delta and b chains.

It localises to the cell membrane. The catalysed reaction is ATP + H2O + 4 H(+)(in) = ADP + phosphate + 5 H(+)(out). Functionally, produces ATP from ADP in the presence of a proton gradient across the membrane. The catalytic sites are hosted primarily by the beta subunits. This is ATP synthase subunit beta from Buchnera aphidicola subsp. Schizaphis graminum (strain Sg).